Here is a 254-residue protein sequence, read N- to C-terminus: tRNA (guanine-N(1)-)-methyltransferase (254 aa).

S-adenosyl-L-methionine is bound by residues Gly-113 and Ile-133–Leu-138.

The protein belongs to the RNA methyltransferase TrmD family. As to quaternary structure, homodimer.

It localises to the cytoplasm. It catalyses the reaction guanosine(37) in tRNA + S-adenosyl-L-methionine = N(1)-methylguanosine(37) in tRNA + S-adenosyl-L-homocysteine + H(+). In terms of biological role, specifically methylates guanosine-37 in various tRNAs. The protein is tRNA (guanine-N(1)-)-methyltransferase of Edwardsiella ictaluri (strain 93-146).